A 291-amino-acid polypeptide reads, in one-letter code: N-acetylmannosamine kinase (291 aa).

ATP contacts are provided by residues 5-12 and 132-139; these read AIDIGGTK and GVGGGVVS. Zn(2+) is bound by residues His156, Cys166, Cys168, and Cys173.

Belongs to the ROK (NagC/XylR) family. NanK subfamily. As to quaternary structure, homodimer.

The catalysed reaction is an N-acyl-D-mannosamine + ATP = an N-acyl-D-mannosamine 6-phosphate + ADP + H(+). The protein operates within amino-sugar metabolism; N-acetylneuraminate degradation; D-fructose 6-phosphate from N-acetylneuraminate: step 2/5. Its function is as follows. Catalyzes the phosphorylation of N-acetylmannosamine (ManNAc) to ManNAc-6-P. The chain is N-acetylmannosamine kinase from Escherichia coli (strain SMS-3-5 / SECEC).